Reading from the N-terminus, the 333-residue chain is 4-hydroxy-2-oxovalerate aldolase (333 aa).

One can recognise a Pyruvate carboxyltransferase domain in the interval 3–253; the sequence is ILINDSTLRD…NTGIDLYHFL (251 aa). 11 to 12 provides a ligand contact to substrate; the sequence is RD. Aspartate 12 contributes to the Mn(2+) binding site. The active-site Proton acceptor is histidine 15. 2 residues coordinate substrate: serine 165 and histidine 192. Mn(2+) contacts are provided by histidine 192 and histidine 194.

This sequence belongs to the 4-hydroxy-2-oxovalerate aldolase family. In terms of assembly, interacts with MhpF.

The enzyme catalyses (S)-4-hydroxy-2-oxopentanoate = acetaldehyde + pyruvate. It functions in the pathway aromatic compound metabolism; 3-phenylpropanoate degradation. Catalyzes the retro-aldol cleavage of 4-hydroxy-2-oxopentanoate to pyruvate and acetaldehyde. Is involved in the meta-cleavage pathway for the degradation of aromatic compounds. In Serratia proteamaculans (strain 568), this protein is 4-hydroxy-2-oxovalerate aldolase.